The chain runs to 226 residues: Uracil-DNA glycosylase (226 aa).

The Proton acceptor role is filled by aspartate 64.

Belongs to the uracil-DNA glycosylase (UDG) superfamily. UNG family.

It localises to the cytoplasm. It carries out the reaction Hydrolyzes single-stranded DNA or mismatched double-stranded DNA and polynucleotides, releasing free uracil.. Its function is as follows. Excises uracil residues from the DNA which can arise as a result of misincorporation of dUMP residues by DNA polymerase or due to deamination of cytosine. This chain is Uracil-DNA glycosylase, found in Proteus mirabilis (strain HI4320).